Consider the following 452-residue polypeptide: COBRA-like protein 1 (452 aa).

Positions 1-33 (MGFFLCSSSSIFFKFGISIIFLVSFSGLTPSEA) are cleaved as a signal peptide. Residues Asn42, Asn167, Asn175, Asn214, Asn239, Asn254, Asn323, Asn338, and Asn357 are each glycosylated (N-linked (GlcNAc...) asparagine). Ser432 carries GPI-anchor amidated serine lipidation. Positions 433–452 (VGSLFAAMALLLIVFLHGNL) are cleaved as a propeptide — removed in mature form.

This sequence belongs to the COBRA family. As to expression, expressed in roots, stems, leaves, flowers and siliques.

It is found in the cell membrane. The sequence is that of COBRA-like protein 1 (COBL1) from Arabidopsis thaliana (Mouse-ear cress).